We begin with the raw amino-acid sequence, 227 residues long: Cytochrome c oxidase subunit 2 (227 aa).

Residues 1-14 (MAYPFQLGLQDATS) are Mitochondrial intermembrane-facing. Residues 15 to 45 (PIMEELTNFHDHTLMIVFLISSLVLYLISLM) form a helical membrane-spanning segment. The Mitochondrial matrix segment spans residues 46 to 59 (LSTKLIHTSTMDAQ). Residues 60–87 (EVETIWTILPAIILIMIALPSLRILYMM) traverse the membrane as a helical segment. Residues 88–227 (DEINNPALTV…LFENWSISMS (140 aa)) are Mitochondrial intermembrane-facing. Cu cation-binding residues include His161, Cys196, Glu198, Cys200, His204, and Met207. Glu198 contributes to the Mg(2+) binding site.

Belongs to the cytochrome c oxidase subunit 2 family. Component of the cytochrome c oxidase (complex IV, CIV), a multisubunit enzyme composed of 14 subunits. The complex is composed of a catalytic core of 3 subunits MT-CO1, MT-CO2 and MT-CO3, encoded in the mitochondrial DNA, and 11 supernumerary subunits COX4I, COX5A, COX5B, COX6A, COX6B, COX6C, COX7A, COX7B, COX7C, COX8 and NDUFA4, which are encoded in the nuclear genome. The complex exists as a monomer or a dimer and forms supercomplexes (SCs) in the inner mitochondrial membrane with NADH-ubiquinone oxidoreductase (complex I, CI) and ubiquinol-cytochrome c oxidoreductase (cytochrome b-c1 complex, complex III, CIII), resulting in different assemblies (supercomplex SCI(1)III(2)IV(1) and megacomplex MCI(2)III(2)IV(2)). Found in a complex with TMEM177, COA6, COX18, COX20, SCO1 and SCO2. Interacts with TMEM177 in a COX20-dependent manner. Interacts with COX20. Interacts with COX16. The cofactor is Cu cation.

It localises to the mitochondrion inner membrane. The enzyme catalyses 4 Fe(II)-[cytochrome c] + O2 + 8 H(+)(in) = 4 Fe(III)-[cytochrome c] + 2 H2O + 4 H(+)(out). Its function is as follows. Component of the cytochrome c oxidase, the last enzyme in the mitochondrial electron transport chain which drives oxidative phosphorylation. The respiratory chain contains 3 multisubunit complexes succinate dehydrogenase (complex II, CII), ubiquinol-cytochrome c oxidoreductase (cytochrome b-c1 complex, complex III, CIII) and cytochrome c oxidase (complex IV, CIV), that cooperate to transfer electrons derived from NADH and succinate to molecular oxygen, creating an electrochemical gradient over the inner membrane that drives transmembrane transport and the ATP synthase. Cytochrome c oxidase is the component of the respiratory chain that catalyzes the reduction of oxygen to water. Electrons originating from reduced cytochrome c in the intermembrane space (IMS) are transferred via the dinuclear copper A center (CU(A)) of subunit 2 and heme A of subunit 1 to the active site in subunit 1, a binuclear center (BNC) formed by heme A3 and copper B (CU(B)). The BNC reduces molecular oxygen to 2 water molecules using 4 electrons from cytochrome c in the IMS and 4 protons from the mitochondrial matrix. This is Cytochrome c oxidase subunit 2 (MT-CO2) from Gerbilliscus robustus (Fringe-tailed gerbil).